A 235-amino-acid polypeptide reads, in one-letter code: Proteasome subunit alpha type-2 (235 aa).

Belongs to the peptidase T1A family. In terms of assembly, the 26S proteasome consists of a 20S proteasome core and two 19S regulatory subunits. The 20S proteasome core is composed of 28 subunits that are arranged in four stacked rings, resulting in a barrel-shaped structure. The two end rings are each formed by seven alpha subunits, and the two central rings are each formed by seven beta subunits. The catalytic chamber with the active sites is on the inside of the barrel.

Its subcellular location is the cytoplasm. The protein localises to the nucleus. The proteasome is a multicatalytic proteinase complex which is characterized by its ability to cleave peptides with Arg, Phe, Tyr, Leu, and Glu adjacent to the leaving group at neutral or slightly basic pH. The proteasome has an ATP-dependent proteolytic activity. The polypeptide is Proteasome subunit alpha type-2 (PAB1) (Oryza sativa subsp. indica (Rice)).